Consider the following 546-residue polypeptide: Protein FAM124A (546 aa).

3 disordered regions span residues 1–37 (MDPKAGGGGEEDDCVDSGAETGGSDYSHLSSTSSELS), 285–361 (KFPK…QRSK), and 488–546 (SSSS…EFYI). Positions 24–36 (SDYSHLSSTSSEL) are enriched in low complexity. The span at 285–302 (KFPKPGRVHHSSEKKRHS) shows a compositional bias: basic residues. Polar residues-rich tracts occupy residues 304 to 324 (PLPSTAVPSHTPGSSQQSPLN) and 347 to 361 (ANSTPNPPWSFQRSK). Residues 488-511 (SSSSATARAAPPAPSTSTLTDSSP) show a composition bias toward low complexity.

Belongs to the FAM124 family.

This is Protein FAM124A (FAM124A) from Pongo abelii (Sumatran orangutan).